The following is a 641-amino-acid chain: Putative phagocytic receptor 1a (641 aa).

An N-terminal signal peptide occupies residues 1 to 23 (MKINKKQIVFFILFSIFLNHVNG). Over 24–279 (IFYLPGMIPH…ESNDNSVHWF (256 aa)) the chain is Extracellular. Residues 280-300 (SILNSLMIVFILTVMVAMIII) traverse the membrane as a helical segment. At 301 to 349 (RTLKKDIRRYTSIDTSEDRDSQEETGWKMIHGDVFRPPSHPMLLSVCIG) the chain is on the cytoplasmic side. The helical transmembrane segment at 350-370 (SGVQIFSMTLITMIFAVLGFL) threads the bilayer. At 371–374 (SPAN) the chain is on the extracellular side. A helical membrane pass occupies residues 375 to 395 (IGGLATALIVLFVLSAMFAGY). The Cytoplasmic segment spans residues 396 to 413 (FSTRVFTIFKGRNWKKNT). The helical transmembrane segment at 414–434 (IYTALSMPGIIFGIFFFVNMF) threads the bilayer. Residues 435–445 (LRGAKSSAAVP) lie on the Extracellular side of the membrane. A helical membrane pass occupies residues 446–466 (FGTFASIIAMWFGISVPLVFL). The Cytoplasmic portion of the chain corresponds to 467 to 502 (GSYFASKKPVPEDPVRTNQIPRQVPDQIWYMNPYLS). The helical transmembrane segment at 503–523 (ILMGGILPFGAVFIELHFILT) threads the bilayer. Topologically, residues 524–532 (SLWDNQFYY) are extracellular. Residues 533-553 (IFGFLFIVLMILIVTSAEISI) form a helical membrane-spanning segment. Topologically, residues 554-578 (VMCYFQLCAEDHHWWWRSFLTAGSS) are cytoplasmic. A helical transmembrane segment spans residues 579 to 599 (SLYMFIYSVSFFRYLGITKFI). At 600-608 (SSLLDFSYS) the chain is on the extracellular side. Residues 609-629 (FIMSLAFAALTGTIGFYSCYF) form a helical membrane-spanning segment. At 630 to 641 (LVRKIYSSIHIN) the chain is on the cytoplasmic side.

The protein belongs to the nonaspanin (TM9SF) (TC 9.A.2) family.

It is found in the membrane. Its function is as follows. Involved in adhesion, phagocytosis of hydrophilic particles and intracellular killing of bacteria. Associates with proteins harboring glycine-rich transmembrane domains and ensures their efficient localization to the cell surface. The polypeptide is Putative phagocytic receptor 1a (phg1a) (Dictyostelium discoideum (Social amoeba)).